The chain runs to 500 residues: NAD(P)H-quinone oxidoreductase chain 4, chloroplastic (500 aa).

Transmembrane regions (helical) follow at residues Phe4 to Leu24, Ile37 to Leu57, Gly84 to Ala104, Ser111 to Phe129, Leu134 to Met154, Phe167 to Leu187, Ala208 to Ile228, His242 to Val262, Ala272 to Ala292, Ile305 to Asp325, Gly330 to Gly350, Ile374 to Ala396, Phe411 to Ile431, and Leu462 to Val482.

It belongs to the complex I subunit 4 family.

Its subcellular location is the plastid. It is found in the chloroplast thylakoid membrane. The catalysed reaction is a plastoquinone + NADH + (n+1) H(+)(in) = a plastoquinol + NAD(+) + n H(+)(out). It catalyses the reaction a plastoquinone + NADPH + (n+1) H(+)(in) = a plastoquinol + NADP(+) + n H(+)(out). The sequence is that of NAD(P)H-quinone oxidoreductase chain 4, chloroplastic from Chloranthus spicatus (Chulantree).